The primary structure comprises 276 residues: Large ribosomal subunit protein uL2 (276 aa).

Disordered regions lie at residues M1–H58 and R218–K276. The span at A16–S27 shows a compositional bias: polar residues. The span at R255–K276 shows a compositional bias: basic residues.

This sequence belongs to the universal ribosomal protein uL2 family. In terms of assembly, part of the 50S ribosomal subunit. Forms a bridge to the 30S subunit in the 70S ribosome.

Its function is as follows. One of the primary rRNA binding proteins. Required for association of the 30S and 50S subunits to form the 70S ribosome, for tRNA binding and peptide bond formation. It has been suggested to have peptidyltransferase activity; this is somewhat controversial. Makes several contacts with the 16S rRNA in the 70S ribosome. The polypeptide is Large ribosomal subunit protein uL2 (Bifidobacterium animalis subsp. lactis (strain AD011)).